A 167-amino-acid polypeptide reads, in one-letter code: Signal peptidase complex catalytic subunit SEC11 (167 aa).

Over 1–9 (MNLRFELQK) the chain is Cytoplasmic. The chain crosses the membrane as a helical; Signal-anchor for type II membrane protein span at residues 10-30 (LLNVCFLFASAYMFWQGLAIA). The Lumenal portion of the chain corresponds to 31 to 167 (TNSASPIVVV…LGLSALLGGE (137 aa)). Active-site charge relay system residues include serine 44, histidine 83, and aspartate 109. The N-linked (GlcNAc...) asparagine glycan is linked to asparagine 121. Residues 153-164 (ALLGMLGLSALL) form a C-terminal short (CTS) helix region.

It belongs to the peptidase S26B family. In terms of assembly, component of the signal peptidase complex (SPC) composed of a catalytic subunit SEC11 and three accessory subunits SPC1, SPC2 and SPC3. The complex induces a local thinning of the ER membrane which is used to measure the length of the signal peptide (SP) h-region of protein substrates. This ensures the selectivity of the complex towards h-regions shorter than 18-20 amino acids. SPC associates with the translocon complex.

The protein localises to the endoplasmic reticulum membrane. The enzyme catalyses Cleavage of hydrophobic, N-terminal signal or leader sequences from secreted and periplasmic proteins.. Catalytic component of the signal peptidase complex (SPC) which catalyzes the cleavage of N-terminal signal sequences from nascent proteins as they are translocated into the lumen of the endoplasmic reticulum. Specifically cleaves N-terminal signal peptides that contain a hydrophobic alpha-helix (h-region) shorter than 18-20 amino acids. This chain is Signal peptidase complex catalytic subunit SEC11 (SEC11), found in Saccharomyces cerevisiae (strain Lalvin QA23) (Baker's yeast).